Reading from the N-terminus, the 236-residue chain is Biosynthetic peptidoglycan transglycosylase (236 aa).

A helical membrane pass occupies residues 20 to 40; it reads LVFIVLSVLILPYALIGLYLL.

The protein belongs to the glycosyltransferase 51 family.

Its subcellular location is the cell inner membrane. The catalysed reaction is [GlcNAc-(1-&gt;4)-Mur2Ac(oyl-L-Ala-gamma-D-Glu-L-Lys-D-Ala-D-Ala)](n)-di-trans,octa-cis-undecaprenyl diphosphate + beta-D-GlcNAc-(1-&gt;4)-Mur2Ac(oyl-L-Ala-gamma-D-Glu-L-Lys-D-Ala-D-Ala)-di-trans,octa-cis-undecaprenyl diphosphate = [GlcNAc-(1-&gt;4)-Mur2Ac(oyl-L-Ala-gamma-D-Glu-L-Lys-D-Ala-D-Ala)](n+1)-di-trans,octa-cis-undecaprenyl diphosphate + di-trans,octa-cis-undecaprenyl diphosphate + H(+). It participates in cell wall biogenesis; peptidoglycan biosynthesis. Functionally, peptidoglycan polymerase that catalyzes glycan chain elongation from lipid-linked precursors. The chain is Biosynthetic peptidoglycan transglycosylase from Rhizobium meliloti (strain 1021) (Ensifer meliloti).